The primary structure comprises 301 residues: MADQLIRATAAEGGIRAVGVITTRLTEEARQRHKLSYVATAALGRTMAAGLLMASSMKRSGSRVNVRVKGDGPLGGILVDAGLDGTVRGYVGNPSIELPPNAKGKLDVGGAVGGGYLYVVRDVGYGYPYSSTVELVSGEIGDDVAHYLVNSEQTPSALVLGVFVGAGGVTAAGGLLIQVLPKAARDEALVETLESRVAGLAGFTPLLQAGKNLTEIFSDLLGDMGLEIFSERQMLRFHCGCSFDRVLGALKILGEAELQDMIVKDNGAEATCDFCSNVYQASSDQLAQLIADLQAESTVSG.

2 disulfides stabilise this stretch: cysteine 239-cysteine 241 and cysteine 272-cysteine 275.

It belongs to the HSP33 family. Post-translationally, under oxidizing conditions two disulfide bonds are formed involving the reactive cysteines. Under reducing conditions zinc is bound to the reactive cysteines and the protein is inactive.

It localises to the cytoplasm. Redox regulated molecular chaperone. Protects both thermally unfolding and oxidatively damaged proteins from irreversible aggregation. Plays an important role in the bacterial defense system toward oxidative stress. The chain is 33 kDa chaperonin from Nostoc punctiforme (strain ATCC 29133 / PCC 73102).